Here is a 176-residue protein sequence, read N- to C-terminus: NAD(P)H-quinone oxidoreductase subunit 6, chloroplastic (176 aa).

Helical transmembrane passes span 10–30 (FLLV…VLLP), 33–53 (IYSA…YILL), 61–81 (AQLL…VMFM), 92–112 (LWTI…ISLI), and 152–172 (FFLP…GAIA).

It belongs to the complex I subunit 6 family. In terms of assembly, NDH is composed of at least 16 different subunits, 5 of which are encoded in the nucleus.

Its subcellular location is the plastid. It is found in the chloroplast thylakoid membrane. The catalysed reaction is a plastoquinone + NADH + (n+1) H(+)(in) = a plastoquinol + NAD(+) + n H(+)(out). It catalyses the reaction a plastoquinone + NADPH + (n+1) H(+)(in) = a plastoquinol + NADP(+) + n H(+)(out). Its function is as follows. NDH shuttles electrons from NAD(P)H:plastoquinone, via FMN and iron-sulfur (Fe-S) centers, to quinones in the photosynthetic chain and possibly in a chloroplast respiratory chain. The immediate electron acceptor for the enzyme in this species is believed to be plastoquinone. Couples the redox reaction to proton translocation, and thus conserves the redox energy in a proton gradient. This chain is NAD(P)H-quinone oxidoreductase subunit 6, chloroplastic (ndhG), found in Coffea arabica (Arabian coffee).